Consider the following 249-residue polypeptide: Triosephosphate isomerase (249 aa).

Residues N10 and K12 each coordinate substrate. H94 acts as the Electrophile in catalysis. Catalysis depends on E166, which acts as the Proton acceptor.

The protein belongs to the triosephosphate isomerase family. In terms of assembly, homodimer. The N-terminus is blocked.

It carries out the reaction D-glyceraldehyde 3-phosphate = dihydroxyacetone phosphate. The protein operates within carbohydrate biosynthesis; gluconeogenesis. It participates in carbohydrate degradation; glycolysis; D-glyceraldehyde 3-phosphate from glycerone phosphate: step 1/1. The sequence is that of Triosephosphate isomerase (TPI1) from Paracoccidioides lutzii (strain ATCC MYA-826 / Pb01) (Paracoccidioides brasiliensis).